The chain runs to 122 residues: Large ribosomal subunit protein uL14 (122 aa).

Belongs to the universal ribosomal protein uL14 family. In terms of assembly, part of the 50S ribosomal subunit. Forms a cluster with proteins L3 and L19. In the 70S ribosome, L14 and L19 interact and together make contacts with the 16S rRNA in bridges B5 and B8.

In terms of biological role, binds to 23S rRNA. Forms part of two intersubunit bridges in the 70S ribosome. This chain is Large ribosomal subunit protein uL14, found in Paracoccus denitrificans (strain Pd 1222).